The chain runs to 67 residues: ATP synthase F(0) complex subunit 8 (67 aa).

The chain crosses the membrane as a helical span at residues 8–24; sequence TWFTTIVAMILSLFILM. Lys-54 carries the post-translational modification N6-acetyllysine; alternate. Position 54 is an N6-succinyllysine; alternate (Lys-54). An N6-acetyllysine modification is found at Lys-57.

It belongs to the ATPase protein 8 family. In terms of assembly, component of the ATP synthase complex composed at least of ATP5F1A/subunit alpha, ATP5F1B/subunit beta, ATP5MC1/subunit c (homooctomer), MT-ATP6/subunit a, MT-ATP8/subunit 8, ATP5ME/subunit e, ATP5MF/subunit f, ATP5MG/subunit g, ATP5MK/subunit k, ATP5MJ/subunit j, ATP5F1C/subunit gamma, ATP5F1D/subunit delta, ATP5F1E/subunit epsilon, ATP5PF/subunit F6, ATP5PB/subunit b, ATP5PD/subunit d, ATP5PO/subunit OSCP. ATP synthase complex consists of a soluble F(1) head domain (subunits alpha(3) and beta(3)) - the catalytic core - and a membrane F(0) domain - the membrane proton channel (subunits c, a, 8, e, f, g, k and j). These two domains are linked by a central stalk (subunits gamma, delta, and epsilon) rotating inside the F1 region and a stationary peripheral stalk (subunits F6, b, d, and OSCP). Interacts with PRICKLE3.

The protein localises to the mitochondrion membrane. Its function is as follows. Subunit 8, of the mitochondrial membrane ATP synthase complex (F(1)F(0) ATP synthase or Complex V) that produces ATP from ADP in the presence of a proton gradient across the membrane which is generated by electron transport complexes of the respiratory chain. ATP synthase complex consist of a soluble F(1) head domain - the catalytic core - and a membrane F(1) domain - the membrane proton channel. These two domains are linked by a central stalk rotating inside the F(1) region and a stationary peripheral stalk. During catalysis, ATP synthesis in the catalytic domain of F(1) is coupled via a rotary mechanism of the central stalk subunits to proton translocation. In vivo, can only synthesize ATP although its ATP hydrolase activity can be activated artificially in vitro. Part of the complex F(0) domain. The polypeptide is ATP synthase F(0) complex subunit 8 (Oryctolagus cuniculus (Rabbit)).